The following is a 338-amino-acid chain: uncharacterized protein (338 aa).

A disordered region spans residues 1-72 (MASPPILSRE…LNPVEDYDSK (72 aa)). Over residues 24–38 (GGNSEVNIDPSASSS) the composition is skewed to polar residues. Residues 49–58 (ADTKIDPHLL) are compositionally biased toward basic and acidic residues. Positions 59-68 (EEDDLNPVED) are enriched in acidic residues.

Its subcellular location is the cytoplasm. The protein localises to the nucleus. This is an uncharacterized protein from Schizosaccharomyces pombe (strain 972 / ATCC 24843) (Fission yeast).